Consider the following 91-residue polypeptide: Small ribosomal subunit protein uS19 (91 aa).

Belongs to the universal ribosomal protein uS19 family.

Protein S19 forms a complex with S13 that binds strongly to the 16S ribosomal RNA. This Marinomonas sp. (strain MWYL1) protein is Small ribosomal subunit protein uS19.